Here is a 2111-residue protein sequence, read N- to C-terminus: Mycocerosic acid synthase-like polyketide synthase (2111 aa).

An N-terminal signal peptide occupies residues 1–15 (MTQNCVAPVAIIGMA). The N-palmitoyl cysteine moiety is linked to residue Cys16. The S-diacylglycerol cysteine moiety is linked to residue Cys16. The Ketosynthase family 3 (KS3) domain occupies 16 to 428 (CRLPGAINSP…GTNVHAVLEQ (413 aa)). Cys178 (acyl-thioester intermediate; for beta-ketoacyl synthase activity) is an active-site residue. Residues His313 and His349 each act as for beta-ketoacyl synthase activity in the active site. The tract at residues 430–537 (PESPAETAAE…MPQQAVTNDD (108 aa)) is linker domain (LD). Residues 538–837 (RGPVWVFSGQ…LAVFAAMRRQ (300 aa)) form an acyltransferase (AT) region. Ser629 (acyl-ester intermediate; for acyltransferase activity) is an active-site residue. Residues 896 to 1176 (PSVSVHPLLG…LSAMGLQLGT (281 aa)) are dehydratase (DH). Residues 901-1025 (HPLLGSHVVL…GDVDAERPAA (125 aa)) are N-terminal hotdog fold. The region spanning 901–1183 (HPLLGSHVVL…LGTGNSDKAE (283 aa)) is the PKS/mFAS DH domain. His934 serves as the catalytic Proton acceptor; for dehydratase activity. The interval 1036–1183 (PNRVDGDELR…LGTGNSDKAE (148 aa)) is C-terminal hotdog fold. Asp1100 serves as the catalytic Proton donor; for dehydratase activity. The segment at 1215–1391 (SWLVILAGDD…SPEDETAWRD (177 aa)) is pseudo beta-ketoacyl reductase (PsiKR). Positions 1419-1743 (EGMRLVVRNP…QHTGKLVIDI (325 aa)) are enoylreductase (ER). The tract at residues 1765 to 2008 (GAYVITGGLG…RSPFAELFLA (244 aa)) is beta-ketoacyl reductase (KR). Residues 1773–1776 (LGGL), 1796–1799 (SRSA), 1824–1825 (DI), and 1902–1903 (FS) each bind NADP(+). The region spanning 2029–2104 (EEWPTHLRRL…QRLCEMLDTD (76 aa)) is the Carrier domain. Ser2064 bears the O-(pantetheine 4'-phosphoryl)serine mark.

In terms of assembly, homodimer.

The protein localises to the cell membrane. The protein operates within lipid metabolism; fatty acid biosynthesis. Polyketide synthase involved in the biosynthesis of 2,4-dimethyl-2-eicosenoic acid, a lipid component of the lipooligosaccharides (LOS) which are not located at the bacterial surface but rather in deeper compartments of the cell envelope of M.smegmatis. This is Mycocerosic acid synthase-like polyketide synthase from Mycolicibacterium smegmatis (strain ATCC 700084 / mc(2)155) (Mycobacterium smegmatis).